Here is a 560-residue protein sequence, read N- to C-terminus: Putative ABC transporter ATP-binding protein SP_0483 (560 aa).

2 ABC transporter domains span residues 6 to 247 and 297 to 528; these read IEWK…GIRE and FRLE…ANLK. ATP-binding positions include 40–47 and 329–336; these read GPSGSGKS and GKNGAGKS.

The protein belongs to the ABC transporter superfamily.

It is found in the cell membrane. In terms of biological role, probably part of an ABC transporter complex. Responsible for energy coupling to the transport system. In Streptococcus pneumoniae serotype 4 (strain ATCC BAA-334 / TIGR4), this protein is Putative ABC transporter ATP-binding protein SP_0483.